The following is a 132-amino-acid chain: D-ribose pyranase (132 aa).

His-20 (proton donor) is an active-site residue. Residues Asp-28, His-99, and 121-123 (YSN) contribute to the substrate site.

It belongs to the RbsD / FucU family. RbsD subfamily. As to quaternary structure, homodecamer.

It is found in the cytoplasm. It carries out the reaction beta-D-ribopyranose = beta-D-ribofuranose. Its pathway is carbohydrate metabolism; D-ribose degradation; D-ribose 5-phosphate from beta-D-ribopyranose: step 1/2. Functionally, catalyzes the interconversion of beta-pyran and beta-furan forms of D-ribose. This is D-ribose pyranase from Streptococcus agalactiae serotype V (strain ATCC BAA-611 / 2603 V/R).